A 206-amino-acid polypeptide reads, in one-letter code: Orotate phosphoribosyltransferase (206 aa).

Residues arginine 97, lysine 98, lysine 101, and 125 to 133 (NDVIASGRS) contribute to the 5-phospho-alpha-D-ribose 1-diphosphate site. Orotate is bound at residue arginine 157.

It belongs to the purine/pyrimidine phosphoribosyltransferase family. PyrE subfamily. Homodimer. Requires Mg(2+) as cofactor.

It catalyses the reaction orotidine 5'-phosphate + diphosphate = orotate + 5-phospho-alpha-D-ribose 1-diphosphate. The protein operates within pyrimidine metabolism; UMP biosynthesis via de novo pathway; UMP from orotate: step 1/2. Its function is as follows. Catalyzes the transfer of a ribosyl phosphate group from 5-phosphoribose 1-diphosphate to orotate, leading to the formation of orotidine monophosphate (OMP). This chain is Orotate phosphoribosyltransferase, found in Chlamydia caviae (strain ATCC VR-813 / DSM 19441 / 03DC25 / GPIC) (Chlamydophila caviae).